The primary structure comprises 173 residues: Co-chaperone protein HscB (173 aa).

Residues 2 to 74 (DYFTLFGLPA…LKRAEYMLSQ (73 aa)) enclose the J domain.

Belongs to the HscB family. Interacts with HscA and stimulates its ATPase activity. Interacts with IscU.

In terms of biological role, co-chaperone involved in the maturation of iron-sulfur cluster-containing proteins. Seems to help targeting proteins to be folded toward HscA. This Xenorhabdus nematophila (strain ATCC 19061 / DSM 3370 / CCUG 14189 / LMG 1036 / NCIMB 9965 / AN6) protein is Co-chaperone protein HscB.